The primary structure comprises 512 residues: Delta(14)-sterol reductase (512 aa).

The next 8 membrane-spanning stretches (helical) occupy residues 27 to 47 (IGAS…GFLC), 100 to 120 (AVLG…LLPA), 140 to 160 (ACLS…VRGP), 172 to 192 (YIQL…YVYL), 242 to 262 (SFME…AFAA), 278 to 298 (WTPL…VIIS), 324 to 344 (FGFM…SIQA), and 353 to 373 (ALGP…YYIF). Residues K380, R384, L407, W412, and 419–420 (NY) contribute to the NADP(+) site. Helical transmembrane passes span 418 to 438 (INYL…LAAG) and 458 to 478 (MKGA…ILLI). NADP(+) is bound by residues D484, 488–492 (CRRKY), and Y499.

It belongs to the ERG4/ERG24 family.

Its subcellular location is the membrane. It catalyses the reaction 4,4-dimethyl-5alpha-cholesta-8,24-dien-3beta-ol + NADP(+) = 4,4-dimethyl-5alpha-cholesta-8,14,24-trien-3beta-ol + NADPH + H(+). The protein operates within steroid biosynthesis; zymosterol biosynthesis; zymosterol from lanosterol: step 2/6. Functionally, reduces the C14=C15 double bond of 4,4-dimethyl-cholesta-8,14,24-trienol to produce 4,4-dimethyl-cholesta-8,24-dienol. In Septoria lycopersici (Tomato leaf spot fungus), this protein is Delta(14)-sterol reductase (ERG3).